Consider the following 131-residue polypeptide: Profilin-5 (131 aa).

C13 and C115 are joined by a disulfide. The Involved in PIP2 interaction motif lies at 81 to 97; that stretch reads AVIRGKKGAGGITIKKT. T111 is subject to Phosphothreonine.

The protein belongs to the profilin family. As to quaternary structure, occurs in many kinds of cells as a complex with monomeric actin in a 1:1 ratio. Phosphorylated by MAP kinases.

The protein resides in the cytoplasm. It is found in the cytoskeleton. Its function is as follows. Binds to actin and affects the structure of the cytoskeleton. At high concentrations, profilin prevents the polymerization of actin, whereas it enhances it at low concentrations. The sequence is that of Profilin-5 from Phleum pratense (Common timothy).